The chain runs to 865 residues: Protein translocase subunit SecA (865 aa).

ATP-binding positions include Gln85, 103-107 (GEGKT), and Asp505. Positions 847, 849, 858, and 859 each coordinate Zn(2+).

This sequence belongs to the SecA family. In terms of assembly, monomer and homodimer. Part of the essential Sec protein translocation apparatus which comprises SecA, SecYEG and auxiliary proteins SecDF. Other proteins may also be involved. Zn(2+) serves as cofactor.

Its subcellular location is the cell membrane. The protein resides in the cytoplasm. It catalyses the reaction ATP + H2O + cellular proteinSide 1 = ADP + phosphate + cellular proteinSide 2.. In terms of biological role, part of the Sec protein translocase complex. Interacts with the SecYEG preprotein conducting channel. Has a central role in coupling the hydrolysis of ATP to the transfer of proteins into and across the cell membrane, serving as an ATP-driven molecular motor driving the stepwise translocation of polypeptide chains across the membrane. In Lactococcus lactis subsp. cremoris (strain MG1363), this protein is Protein translocase subunit SecA.